Here is a 281-residue protein sequence, read N- to C-terminus: Pantothenate synthetase (281 aa).

Residue 30-37 coordinates ATP; sequence MGYLHEGH. Catalysis depends on His-37, which acts as the Proton donor. Gln-61 contributes to the (R)-pantoate binding site. Gln-61 provides a ligand contact to beta-alanine. 147-150 contributes to the ATP binding site; that stretch reads GEKD. Residue Gln-153 coordinates (R)-pantoate. Residues Ile-176 and 184 to 187 contribute to the ATP site; that span reads KSSR.

This sequence belongs to the pantothenate synthetase family. Homodimer.

The protein localises to the cytoplasm. It catalyses the reaction (R)-pantoate + beta-alanine + ATP = (R)-pantothenate + AMP + diphosphate + H(+). Its pathway is cofactor biosynthesis; (R)-pantothenate biosynthesis; (R)-pantothenate from (R)-pantoate and beta-alanine: step 1/1. Its function is as follows. Catalyzes the condensation of pantoate with beta-alanine in an ATP-dependent reaction via a pantoyl-adenylate intermediate. In Clostridium botulinum (strain Langeland / NCTC 10281 / Type F), this protein is Pantothenate synthetase.